A 30-amino-acid polypeptide reads, in one-letter code: Proteinase inhibitor CeKI (30 aa).

This sequence belongs to the protease inhibitor I3 (leguminous Kunitz-type inhibitor) family.

Its function is as follows. Potent inhibitor of serine proteases plasma kallikrein, plasmin and coagulation factor XIIa. Weak inhibitor of serine proteases trypsin and coagulation factor Xa. Does not inhibit the serine proteases chymotrypsin, elastase or thrombin. Inhibits kinin release from HMW-kininogen by kallikrein in vitro. The chain is Proteinase inhibitor CeKI from Paubrasilia echinata (Pau Brasil).